Reading from the N-terminus, the 935-residue chain is Coatomer subunit gamma (935 aa).

5 HEAT repeats span residues 258–296, 337–372, 373–410, 412–449, and 524–562; these read PQLF…RNSR, PEKI…TGTS, KNIS…NFPQ, WKSI…FVPQ, and PTLY…ARNK. Residues 630–656 are disordered; it reads KSETTLDTTPEAESVPEKRADANSFAG. Thr-638 is modified (phosphothreonine). A Phosphoserine modification is found at Ser-643. A Glycyl lysine isopeptide (Lys-Gly) (interchain with G-Cter in ubiquitin) cross-link involves residue Lys-647. The residue at position 653 (Ser-653) is a Phosphoserine.

This sequence belongs to the COPG family. As to quaternary structure, oligomeric complex that consists of at least the alpha, beta, beta', gamma, delta, epsilon and zeta subunits. Interacts (via C-terminus) with GEA1 (via N-terminal region) and KEI1 (via C-terminal region).

It is found in the cytoplasm. It localises to the golgi apparatus membrane. The protein resides in the cytoplasmic vesicle. Its subcellular location is the COPI-coated vesicle membrane. The protein localises to the endosome. Its function is as follows. The coatomer is a cytosolic protein complex that binds to dilysine motifs and reversibly associates with Golgi non-clathrin-coated vesicles, which further mediate biosynthetic protein transport from the ER, via the Golgi up to the trans Golgi network. Coatomer complex is required for budding from Golgi membranes, and is essential for the retrograde Golgi-to-ER transport of dilysine-tagged proteins. In Saccharomyces cerevisiae (strain ATCC 204508 / S288c) (Baker's yeast), this protein is Coatomer subunit gamma (SEC21).